The chain runs to 379 residues: MIPALTVPLLFLCATSASPAAGRGVLVPPDPKSKLIPSTTKGTHAIAKPTPSQAALRHLMVPADNFGLEMLTDHQRTRATHPQRQGQDLALPDKTRAKTKVTLDNNTGPRKVNSLSNREALAGAQPEGRNFIPSFFGNSKVHQDRSQLSSYFQLHTKSSSLTASQNLQGRKYSRNNDYGSMDHESNRPGKMNPHREEEVVSNSTKPAWVINRQPSSVLFQRPAFRKGFDNKEMCIAECHRDKDEREAYCNSDFAVNGIVQDMESVGKESRLLTLLVSSDGLYKMNRLYISPDGFFFKVKILVTDTLNCHKPCLDFKPGVRYIIMGQIYHKRIIFPQAMQHLLGGRLRAGDGFIKSSSYVQRFNRKRGRKVLAAAHSKCR.

The signal sequence occupies residues 1-17 (MIPALTVPLLFLCATSA). Disordered stretches follow at residues 76 to 95 (RTRA…PDKT) and 162 to 194 (TASQ…MNPH). Residues 180–194 (SMDHESNRPGKMNPH) show a composition bias toward basic and acidic residues. 3 disulfides stabilise this stretch: Cys-234–Cys-308, Cys-238–Cys-312, and Cys-249–Cys-378. Residues 234-378 (CIAECHRDKD…KVLAAAHSKC (145 aa)) enclose the NTR domain.

It belongs to the UPF0450 family.

This Xenopus laevis (African clawed frog) protein is UPF0450 protein C17orf58 homolog.